A 371-amino-acid polypeptide reads, in one-letter code: Histidinol-phosphate aminotransferase (371 aa).

Residue Lys-221 is modified to N6-(pyridoxal phosphate)lysine.

It belongs to the class-II pyridoxal-phosphate-dependent aminotransferase family. Histidinol-phosphate aminotransferase subfamily. Homodimer. The cofactor is pyridoxal 5'-phosphate.

The catalysed reaction is L-histidinol phosphate + 2-oxoglutarate = 3-(imidazol-4-yl)-2-oxopropyl phosphate + L-glutamate. It participates in amino-acid biosynthesis; L-histidine biosynthesis; L-histidine from 5-phospho-alpha-D-ribose 1-diphosphate: step 7/9. This chain is Histidinol-phosphate aminotransferase, found in Pseudoalteromonas atlantica (strain T6c / ATCC BAA-1087).